Reading from the N-terminus, the 646-residue chain is Lipoteichoic acid synthase (646 aa).

Residues 1-7 lie on the Cytoplasmic side of the membrane; it reads MSSQKKK. The helical transmembrane segment at 8-28 threads the bilayer; sequence ISLFAFFLLTVITITLKTYFS. Topologically, residues 29-43 are extracellular; it reads YYVDFSLGVKGLVQN. The chain crosses the membrane as a helical span at residues 44–64; the sequence is LILLMNPYSLVALVLSVFLFF. At 65 to 68 the chain is on the cytoplasmic side; sequence KGKK. Residues 69–89 form a helical membrane-spanning segment; the sequence is AFWFMFIGGFLLTFLLYANVV. Over 90–119 the chain is Extracellular; that stretch reads YFRFFSDFLTFSTLNQVGNVESMGGAVSAS. A helical transmembrane segment spans residues 120-140; the sequence is FKWYDFVYFIDTLVYLFILIF. At 141 to 153 the chain is on the cytoplasmic side; that stretch reads KTKWLDTKAFSKK. The chain crosses the membrane as a helical span at residues 154-174; it reads FVPVVMAASVALFFLNLAFAE. The Extracellular segment spans residues 175 to 646; that stretch reads TDRPELLTRT…ETGPKANSKK (472 aa). Mn(2+)-binding residues include E255 and T300. The active site involves T300. H416 provides a ligand contact to substrate. 2 residues coordinate Mn(2+): D475 and H476. Basic and acidic residues predominate over residues 623–638; that stretch reads NPDFKKVNPSKYKYET. The interval 623–646 is disordered; the sequence is NPDFKKVNPSKYKYETGPKANSKK.

It belongs to the LTA synthase family. In terms of processing, proteolytically cleaved.

It localises to the cell membrane. The protein localises to the secreted. It participates in cell wall biogenesis; lipoteichoic acid biosynthesis. Functionally, catalyzes the polymerization of lipoteichoic acid (LTA) polyglycerol phosphate, a reaction that presumably uses phosphatidylglycerol (PG) as substrate. Is required for staphylococcal growth and cell division process. This is Lipoteichoic acid synthase (ltaS) from Staphylococcus aureus (strain USA300).